Reading from the N-terminus, the 298-residue chain is TLR adapter interacting with SLC15A4 on the lysosome (298 aa).

The short motif at 287–291 (SLHIS) is the pLxIS motif element. Ser291 bears the Phosphoserine mark.

Interacts (via pLxIS motif) with IRF5; leading to IRF5 activation. Interacts with SLC15A4; leading to its recruitment to endolysosome. The phosphorylated pLxIS motif constitutes an IRF5-binding motif, leading to recruitment of the transcription factor IRF5 to induce type-I interferons and other cytokines.

It is found in the lysosome membrane. The protein localises to the endosome membrane. The protein resides in the nucleus. It localises to the cytoplasm. In terms of biological role, innate immune adapter that mediates the recruitment and activation of IRF5 downstream of endolysosomal toll-like receptors TLR7, TLR8 and TLR9. Following recruitment to endolysosome by SLC15A4 downstream of TLR7, TLR8 and TLR9, specifically recruits IRF5 transcription factor via its pLxIS motif, leading to IRF5 activation and subsequent expression of type I interferons. Plays a role in the regulation of endolysosomal pH in immune cells such as B-cells, dendritic cells and monocytes. In Mus musculus (Mouse), this protein is TLR adapter interacting with SLC15A4 on the lysosome.